Consider the following 131-residue polypeptide: Profilin-1 (131 aa).

A disulfide bridge connects residues Cys-13 and Cys-115. Residues 81–97 carry the Involved in PIP2 interaction motif; the sequence is RVIRGKKGAGGITIKKT. Thr-111 bears the Phosphothreonine mark.

It belongs to the profilin family. In terms of assembly, occurs in many kinds of cells as a complex with monomeric actin in a 1:1 ratio.

The protein localises to the cytoplasm. Its subcellular location is the cytoskeleton. In terms of biological role, binds to actin and affects the structure of the cytoskeleton. At high concentrations, profilin prevents the polymerization of actin, whereas it enhances it at low concentrations. By binding to PIP2, it inhibits the formation of IP3 and DG. The protein is Profilin-1 (PRO1) of Phleum pratense (Common timothy).